We begin with the raw amino-acid sequence, 736 residues long: Polyribonucleotide nucleotidyltransferase (736 aa).

Mg(2+)-binding residues include Asp-488 and Asp-494. One can recognise a KH domain in the interval 555–614 (PMVQTLEIQKEKIRDVIGLGGKVIKELCKTFDVEIDISENGEVKVWGNVGENVKKAVQSI). The S1 motif domain occupies 624-692 (GDIFDGEVVK…HKNRVKLTLR (69 aa)).

Belongs to the polyribonucleotide nucleotidyltransferase family. Mg(2+) is required as a cofactor.

The protein resides in the cytoplasm. The catalysed reaction is RNA(n+1) + phosphate = RNA(n) + a ribonucleoside 5'-diphosphate. In terms of biological role, involved in mRNA degradation. Catalyzes the phosphorolysis of single-stranded polyribonucleotides processively in the 3'- to 5'-direction. This Orientia tsutsugamushi (strain Ikeda) (Rickettsia tsutsugamushi) protein is Polyribonucleotide nucleotidyltransferase.